A 233-amino-acid chain; its full sequence is Probable RNA 2'-phosphotransferase (233 aa).

The protein belongs to the KptA/TPT1 family.

In terms of biological role, removes the 2'-phosphate from RNA via an intermediate in which the phosphate is ADP-ribosylated by NAD followed by a presumed transesterification to release the RNA and generate ADP-ribose 1''-2''-cyclic phosphate (APPR&gt;P). May function as an ADP-ribosylase. The protein is Probable RNA 2'-phosphotransferase of Hyperthermus butylicus (strain DSM 5456 / JCM 9403 / PLM1-5).